A 294-amino-acid chain; its full sequence is Putative cuticle collagen 145 (294 aa).

Positions 1 to 30 (MEKILVTFSTGAASIAVLAVLFTVPSLYNT) are cleaved as a signal peptide. The span at 100 to 112 (TCPPGPPGPPGQP) shows a compositional bias: pro residues. Disordered regions lie at residues 100–133 (TCPP…ATFA) and 148–276 (PQGP…LPGN). 2 triple-helical region regions span residues 102 to 127 (PPGP…KGDD) and 148 to 277 (PQGP…PGND). 2 stretches are compositionally biased toward low complexity: residues 164–194 (AGPD…NGQP) and 219–265 (APGA…DGQP). The Collagen-like domain maps to 218–276 (GAPGAPGNAGPAGPAGQDGFPGQDGAPGPAGPAGQDGFPGNAGSDGQPGAPGGPGLPGN).

It belongs to the cuticular collagen family. Collagen polypeptide chains are complexed within the cuticle by disulfide bonds and other types of covalent cross-links.

Functionally, nematode cuticles are composed largely of collagen-like proteins. The cuticle functions both as an exoskeleton and as a barrier to protect the worm from its environment. This chain is Putative cuticle collagen 145 (col-145), found in Caenorhabditis elegans.